The following is a 226-amino-acid chain: ATP synthase subunit a (226 aa).

6 helical membrane-spanning segments follow: residues phenylalanine 17 to alanine 37, leucine 79 to phenylalanine 99, serine 105 to isoleucine 125, phenylalanine 134 to valine 154, leucine 176 to leucine 196, and phenylalanine 199 to alanine 219.

This sequence belongs to the ATPase A chain family. As to quaternary structure, F-type ATPases have 2 components, CF(1) - the catalytic core - and CF(0) - the membrane proton channel. CF(1) has five subunits: alpha(3), beta(3), gamma(1), delta(1), epsilon(1). CF(0) has three main subunits: a(1), b(2) and c(9-12). The alpha and beta chains form an alternating ring which encloses part of the gamma chain. CF(1) is attached to CF(0) by a central stalk formed by the gamma and epsilon chains, while a peripheral stalk is formed by the delta and b chains.

It localises to the cell inner membrane. In terms of biological role, key component of the proton channel; it plays a direct role in the translocation of protons across the membrane. The chain is ATP synthase subunit a from Campylobacter jejuni subsp. jejuni serotype O:23/36 (strain 81-176).